A 141-amino-acid chain; its full sequence is Hemoglobin subunit alpha (141 aa).

The Globin domain occupies 1-141 (VLSSTDKSNV…VSTVLTSKYR (141 aa)). Ser3 bears the Phosphoserine mark. N6-succinyllysine occurs at positions 7 and 11. N6-acetyllysine; alternate is present on Lys16. Lys16 is modified (N6-succinyllysine; alternate). At Tyr24 the chain carries Phosphotyrosine. Ser35 carries the post-translational modification Phosphoserine. Lys40 is subject to N6-succinyllysine. His58 contributes to the O2 binding site. His87 is a binding site for heme b. Ser102 carries the post-translational modification Phosphoserine. The residue at position 108 (Thr108) is a Phosphothreonine. A phosphoserine mark is found at Ser124 and Ser131. Phosphothreonine is present on residues Thr134 and Thr137. Ser138 carries the post-translational modification Phosphoserine.

Belongs to the globin family. In terms of assembly, heterotetramer of two alpha chains and two beta chains. In terms of tissue distribution, red blood cells.

In terms of biological role, involved in oxygen transport from the lung to the various peripheral tissues. Functionally, hemopressin acts as an antagonist peptide of the cannabinoid receptor CNR1. Hemopressin-binding efficiently blocks cannabinoid receptor CNR1 and subsequent signaling. This Pteropus alecto (Black flying fox) protein is Hemoglobin subunit alpha (HBA).